The following is a 351-amino-acid chain: Translation initiation factor eIF2B subunit beta (351 aa).

Belongs to the eIF-2B alpha/beta/delta subunits family. As to quaternary structure, component of the translation initiation factor 2B (eIF2B) complex which is a heterodecamer of two sets of five different subunits: alpha, beta, gamma, delta and epsilon. Subunits alpha, beta and delta comprise a regulatory subcomplex and subunits epsilon and gamma comprise a catalytic subcomplex. Within the complex, the hexameric regulatory complex resides at the center, with the two heterodimeric catalytic subcomplexes bound on opposite sides.

It localises to the cytoplasm. It is found in the cytosol. Activated by the chemical integrated stress response (ISR) inhibitor ISRIB which stimulates guanine nucleotide exchange factor activity for both phosphorylated and unphosphorylated eIF2. Acts as a component of the translation initiation factor 2B (eIF2B) complex, which catalyzes the exchange of GDP for GTP on eukaryotic initiation factor 2 (eIF2) gamma subunit. Its guanine nucleotide exchange factor activity is repressed when bound to eIF2 complex phosphorylated on the alpha subunit, thereby limiting the amount of methionyl-initiator methionine tRNA available to the ribosome and consequently global translation is repressed. The protein is Translation initiation factor eIF2B subunit beta (EIF2B2) of Homo sapiens (Human).